The chain runs to 636 residues: Plasma kallikrein (636 aa).

Positions 1-19 (MIALRQAAYFICLFATVSC) are cleaved as a signal peptide. Apple domains follow at residues 21–104 (CLTQ…LKRC), 111–194 (CHRS…LKAC), 201–284 (CRVD…LLTC), and 294–377 (CHSK…LRLC). 12 disulfides stabilise this stretch: cysteine 21–cysteine 104, cysteine 47–cysteine 77, cysteine 51–cysteine 57, cysteine 111–cysteine 194, cysteine 137–cysteine 166, cysteine 141–cysteine 147, cysteine 201–cysteine 284, cysteine 227–cysteine 256, cysteine 231–cysteine 237, cysteine 294–cysteine 377, cysteine 320–cysteine 349, and cysteine 324–cysteine 330. Residues asparagine 66 and asparagine 127 are each glycosylated (N-linked (GlcNAc...) asparagine). N-linked (GlcNAc...) asparagine glycosylation is found at asparagine 361 and asparagine 397. The region spanning 392-627 (IVGGTNASWG…YVDWILEKTQ (236 aa)) is the Peptidase S1 domain. The cysteines at positions 420 and 436 are disulfide-linked. The active-site Charge relay system is the histidine 435. A glycan (N-linked (GlcNAc...) asparagine) is linked at asparagine 454. Aspartate 484 functions as the Charge relay system in the catalytic mechanism. N-linked (GlcNAc...) asparagine glycosylation occurs at asparagine 495. Disulfide bonds link cysteine 518–cysteine 585, cysteine 549–cysteine 564, and cysteine 575–cysteine 603. The Charge relay system role is filled by serine 579.

This sequence belongs to the peptidase S1 family. Plasma kallikrein subfamily. Forms a heterodimer with SERPINA5. The zymogen is activated by factor XIIa, which cleaves the molecule into a light chain, which contains the active site, and a heavy chain, which associates with HMW kininogen. These chains are linked by one or more disulfide bonds.

Its subcellular location is the secreted. The catalysed reaction is Cleaves selectively Arg-|-Xaa and Lys-|-Xaa bonds, including Lys-|-Arg and Arg-|-Ser bonds in (human) kininogen to release bradykinin.. Its activity is regulated as follows. Inhibited by SERPINA5. Functionally, the enzyme cleaves Lys-Arg and Arg-Ser bonds. It activates, in a reciprocal reaction, factor XII after its binding to a negatively charged surface. It also releases bradykinin from HMW kininogen and may also play a role in the renin-angiotensin system by converting prorenin into renin. This is Plasma kallikrein (KLKB1) from Bos taurus (Bovine).